The primary structure comprises 379 residues: Glutamate 5-kinase (379 aa).

Lys-15 serves as a coordination point for ATP. 3 residues coordinate substrate: Ser-54, Asp-144, and Asn-156. An ATP-binding site is contributed by 176–177; sequence TD. One can recognise a PUA domain in the interval 282-360; the sequence is KGVILVDAGA…GEIERALGYK (79 aa).

The protein belongs to the glutamate 5-kinase family.

It is found in the cytoplasm. The enzyme catalyses L-glutamate + ATP = L-glutamyl 5-phosphate + ADP. The protein operates within amino-acid biosynthesis; L-proline biosynthesis; L-glutamate 5-semialdehyde from L-glutamate: step 1/2. In terms of biological role, catalyzes the transfer of a phosphate group to glutamate to form L-glutamate 5-phosphate. The sequence is that of Glutamate 5-kinase from Anaeromyxobacter dehalogenans (strain 2CP-C).